A 226-amino-acid chain; its full sequence is UPF0173 metal-dependent hydrolase GTNG_2675 (226 aa).

It belongs to the UPF0173 family.

The sequence is that of UPF0173 metal-dependent hydrolase GTNG_2675 from Geobacillus thermodenitrificans (strain NG80-2).